The primary structure comprises 108 residues: UPF0060 membrane protein YnfA (108 aa).

Over 1–5 (MLKTT) the chain is Periplasmic. Residues 6-26 (LLFFVTALCEIIGCFLPWLWI) form a helical membrane-spanning segment. Over 27–30 (KRGA) the chain is Cytoplasmic. Residues 31–51 (SVWWLLPAAASLALFVWLLTL) traverse the membrane as a helical segment. Residues 52-60 (HPAASGRVY) are Periplasmic-facing. Residues 61-81 (AAYGGVYVCTALLWLRVVDGV) form a helical membrane-spanning segment. Residues 82–84 (RLT) lie on the Cytoplasmic side of the membrane. A helical transmembrane segment spans residues 85 to 105 (VYDWCGALIALCGMLIIVVGW). Over 106–108 (GRT) the chain is Periplasmic.

This sequence belongs to the UPF0060 family.

It localises to the cell inner membrane. In Salmonella paratyphi A (strain ATCC 9150 / SARB42), this protein is UPF0060 membrane protein YnfA.